We begin with the raw amino-acid sequence, 284 residues long: uncharacterized protein (284 aa).

A helical transmembrane segment spans residues 12–32; it reads ILFILFVVAFCVYLVPRVAIN.

Belongs to the serine esterase family.

Its subcellular location is the membrane. This is an uncharacterized protein from Escherichia coli (strain K12).